The sequence spans 379 residues: S-adenosylmethionine:tRNA ribosyltransferase-isomerase (379 aa).

The segment at 35 to 58 (AESRPHAESVPHAESRPHAESAFS) is disordered.

This sequence belongs to the QueA family. As to quaternary structure, monomer.

The protein localises to the cytoplasm. It carries out the reaction 7-aminomethyl-7-carbaguanosine(34) in tRNA + S-adenosyl-L-methionine = epoxyqueuosine(34) in tRNA + adenine + L-methionine + 2 H(+). The protein operates within tRNA modification; tRNA-queuosine biosynthesis. Transfers and isomerizes the ribose moiety from AdoMet to the 7-aminomethyl group of 7-deazaguanine (preQ1-tRNA) to give epoxyqueuosine (oQ-tRNA). This Rhizobium leguminosarum bv. trifolii (strain WSM2304) protein is S-adenosylmethionine:tRNA ribosyltransferase-isomerase.